Consider the following 577-residue polypeptide: Phosphoethanolamine transferase EptC (577 aa).

A run of 5 helical transmembrane segments spans residues 17 to 37 (LGWALLYFWFFSTLLQAIIYI), 44 to 64 (NGIRDSLLFSSLWLIPVFLFP), 69 to 89 (IIAAVIGVVLWAASLAALCYY), 119 to 139 (YFSLKIVLIALAYTAVAVLLW), and 154 to 174 (VVSFALLYGLILHPIAMNTFI).

The protein belongs to the phosphoethanolamine transferase family. EptC/CptA subfamily. As to quaternary structure, forms a complex with an unidentified protein of approximately 36 kDa.

It localises to the cell inner membrane. The protein operates within bacterial outer membrane biogenesis; LPS core biosynthesis. Catalyzes the addition of a phosphoethanolamine moiety to the outer membrane lipopolysaccharide core. The sequence is that of Phosphoethanolamine transferase EptC (eptC) from Escherichia coli (strain K12).